Consider the following 115-residue polypeptide: DNA-binding protein STK_13740 (115 aa).

This sequence belongs to the PDCD5 family.

This Sulfurisphaera tokodaii (strain DSM 16993 / JCM 10545 / NBRC 100140 / 7) (Sulfolobus tokodaii) protein is DNA-binding protein STK_13740.